A 265-amino-acid polypeptide reads, in one-letter code: UPF0354 protein BH3252 (265 aa).

It belongs to the UPF0354 family.

The protein is UPF0354 protein BH3252 of Halalkalibacterium halodurans (strain ATCC BAA-125 / DSM 18197 / FERM 7344 / JCM 9153 / C-125) (Bacillus halodurans).